The primary structure comprises 176 residues: Retinol-binding protein 4-B (176 aa).

An N-acetylserine modification is found at serine 1. 3 disulfides stabilise this stretch: cysteine 3–cysteine 159, cysteine 69–cysteine 173, and cysteine 119–cysteine 128. A substrate-binding site is contributed by glutamine 97.

It belongs to the calycin superfamily. Lipocalin family.

Its subcellular location is the secreted. Functionally, RBP delivers retinol from the liver stores to the peripheral tissues. In plasma, the RBP-retinol complex interacts with transthyretin, this prevents its loss by filtration through the kidney glomeruli. The protein is Retinol-binding protein 4-B (rbp4b) of Oncorhynchus mykiss (Rainbow trout).